The sequence spans 382 residues: 6-oxocyclohex-1-ene-1-carbonyl-CoA hydrolase (382 aa).

Belongs to the enoyl-CoA hydratase/isomerase family. Homohexamer.

The enzyme catalyses 6-oxocyclohex-1-ene-1-carbonyl-CoA + 2 H2O = 3-hydroxy-6-carboxyhexanoyl-CoA + H(+). It functions in the pathway aromatic compound metabolism; benzoyl-CoA degradation. Functionally, involved in the central benzoyl-CoA catabolism. Catalyzes the addition of one molecule of water to the double bond and the hydrolytic cleavage of C-C bond in the alicyclic ring, 6-oxocyclohex-1-ene-1-carbonyl-CoA (6-OCH-CoA) to yield 3-hydroxypimelyl-CoA. This is 6-oxocyclohex-1-ene-1-carbonyl-CoA hydrolase from Syntrophus aciditrophicus (strain SB).